Consider the following 317-residue polypeptide: Single myb histone 6 (317 aa).

An HTH myb-type domain is found at 1–61 (MGAPKQRWTS…KWRNMNVIVS (61 aa)). The segment at residues 28–57 (WRTILKDPEFSSTLCYRSNVDLKDKWRNMN) is a DNA-binding region (H-T-H motif). Positions 121-189 (KSHRLDNIIM…KVNRKYRIAP (69 aa)) constitute an H15 domain. A coiled-coil region spans residues 244–288 (VAAARAVAEAEAIMAEAEAAAKEAEAAEAEAQAAQAFAEAAFLTL).

It belongs to the histone H1/H5 family. SMH subfamily. In terms of assembly, forms a homodimer and heterodimers.

The protein localises to the nucleus. It localises to the chromosome. The protein resides in the nucleolus. It is found in the telomere. Binds preferentially double-stranded telomeric repeats, but may also bind to the single telomeric strand. This chain is Single myb histone 6 (SMH6), found in Zea mays (Maize).